The primary structure comprises 361 residues: tRNA-specific 2-thiouridylase MnmA (361 aa).

ATP-binding positions include 8–15 (AMSGGVDS) and methionine 35. The interaction with target base in tRNA stretch occupies residues 95-97 (NPD). The active-site Nucleophile is cysteine 100. Cysteine 100 and cysteine 196 are oxidised to a cystine. Glycine 124 provides a ligand contact to ATP. Residues 146-148 (KDQ) form an interaction with tRNA region. Cysteine 196 serves as the catalytic Cysteine persulfide intermediate. The tract at residues 303–304 (RY) is interaction with tRNA.

This sequence belongs to the MnmA/TRMU family.

The protein resides in the cytoplasm. It catalyses the reaction S-sulfanyl-L-cysteinyl-[protein] + uridine(34) in tRNA + AH2 + ATP = 2-thiouridine(34) in tRNA + L-cysteinyl-[protein] + A + AMP + diphosphate + H(+). In terms of biological role, catalyzes the 2-thiolation of uridine at the wobble position (U34) of tRNA, leading to the formation of s(2)U34. In Chlamydia felis (strain Fe/C-56) (Chlamydophila felis), this protein is tRNA-specific 2-thiouridylase MnmA.